Here is a 70-residue protein sequence, read N- to C-terminus: Conotoxin Ep11.12 (70 aa).

The N-terminal stretch at 1–26 (MMFRVTSVGCFLLVILSLNLVVLTNA) is a signal peptide. Cystine bridges form between Cys27/Cys41, Cys34/Cys46, Cys40/Cys50, and Cys45/Cys54. Position 57 is a proline amide (Pro57). Positions 61–70 (AKLREFFRQR) are excised as a propeptide.

Belongs to the conotoxin I2 superfamily. In terms of tissue distribution, expressed by the venom duct.

Its subcellular location is the secreted. The protein is Conotoxin Ep11.12 of Conus episcopatus (Bishop's cone).